Consider the following 277-residue polypeptide: 4-hydroxy-3-methylbut-2-enyl diphosphate reductase (277 aa).

Cysteine 12 is a binding site for [4Fe-4S] cluster. (2E)-4-hydroxy-3-methylbut-2-enyl diphosphate is bound by residues histidine 36 and histidine 70. Positions 36 and 70 each coordinate dimethylallyl diphosphate. Residues histidine 36 and histidine 70 each coordinate isopentenyl diphosphate. Cysteine 92 is a [4Fe-4S] cluster binding site. Residue histidine 120 coordinates (2E)-4-hydroxy-3-methylbut-2-enyl diphosphate. Residue histidine 120 participates in dimethylallyl diphosphate binding. Histidine 120 serves as a coordination point for isopentenyl diphosphate. Glutamate 122 acts as the Proton donor in catalysis. (2E)-4-hydroxy-3-methylbut-2-enyl diphosphate is bound at residue threonine 158. Residue cysteine 186 participates in [4Fe-4S] cluster binding. (2E)-4-hydroxy-3-methylbut-2-enyl diphosphate is bound by residues serine 214, asparagine 216, and serine 258. The dimethylallyl diphosphate site is built by serine 214, asparagine 216, and serine 258. Residues serine 214, asparagine 216, and serine 258 each coordinate isopentenyl diphosphate.

This sequence belongs to the IspH family. The cofactor is [4Fe-4S] cluster.

The catalysed reaction is isopentenyl diphosphate + 2 oxidized [2Fe-2S]-[ferredoxin] + H2O = (2E)-4-hydroxy-3-methylbut-2-enyl diphosphate + 2 reduced [2Fe-2S]-[ferredoxin] + 2 H(+). It catalyses the reaction dimethylallyl diphosphate + 2 oxidized [2Fe-2S]-[ferredoxin] + H2O = (2E)-4-hydroxy-3-methylbut-2-enyl diphosphate + 2 reduced [2Fe-2S]-[ferredoxin] + 2 H(+). It participates in isoprenoid biosynthesis; dimethylallyl diphosphate biosynthesis; dimethylallyl diphosphate from (2E)-4-hydroxy-3-methylbutenyl diphosphate: step 1/1. Its pathway is isoprenoid biosynthesis; isopentenyl diphosphate biosynthesis via DXP pathway; isopentenyl diphosphate from 1-deoxy-D-xylulose 5-phosphate: step 6/6. In terms of biological role, catalyzes the conversion of 1-hydroxy-2-methyl-2-(E)-butenyl 4-diphosphate (HMBPP) into a mixture of isopentenyl diphosphate (IPP) and dimethylallyl diphosphate (DMAPP). Acts in the terminal step of the DOXP/MEP pathway for isoprenoid precursor biosynthesis. This is 4-hydroxy-3-methylbut-2-enyl diphosphate reductase from Campylobacter jejuni subsp. jejuni serotype O:6 (strain 81116 / NCTC 11828).